We begin with the raw amino-acid sequence, 156 residues long: Small ribosomal subunit protein uS7c (156 aa).

It belongs to the universal ribosomal protein uS7 family. Part of the 30S ribosomal subunit.

It is found in the plastid. The protein resides in the chloroplast. In terms of biological role, one of the primary rRNA binding proteins, it binds directly to 16S rRNA where it nucleates assembly of the head domain of the 30S subunit. The sequence is that of Small ribosomal subunit protein uS7c (rps7) from Phaeodactylum tricornutum (strain CCAP 1055/1).